A 284-amino-acid chain; its full sequence is 4-hydroxybenzoate octaprenyltransferase (284 aa).

The next 9 helical transmembrane spans lie at 19 to 39 (IPIL…SHGL), 42 to 62 (ISYL…GCII), 85 to 105 (GQLS…VAFI), 107 to 127 (VLFL…LAIL), 134 to 154 (FFAI…FMAF), 165 to 185 (AWIF…IYAL), 211 to 231 (ILLF…YCDF), 233 to 253 (SFFY…YFLY), and 261 to 281 (CINA…MAVI).

This sequence belongs to the UbiA prenyltransferase family. Mg(2+) is required as a cofactor.

The protein localises to the cell inner membrane. The enzyme catalyses all-trans-octaprenyl diphosphate + 4-hydroxybenzoate = 4-hydroxy-3-(all-trans-octaprenyl)benzoate + diphosphate. It functions in the pathway cofactor biosynthesis; ubiquinone biosynthesis. Its function is as follows. Catalyzes the prenylation of para-hydroxybenzoate (PHB) with an all-trans polyprenyl group. Mediates the second step in the final reaction sequence of ubiquinone-8 (UQ-8) biosynthesis, which is the condensation of the polyisoprenoid side chain with PHB, generating the first membrane-bound Q intermediate 3-octaprenyl-4-hydroxybenzoate. The polypeptide is 4-hydroxybenzoate octaprenyltransferase (Francisella tularensis subsp. novicida (strain U112)).